Reading from the N-terminus, the 254-residue chain is MSLTNKNVVFVAGLGGIGLDTSRELVKRDLKNLVILDRIDNPAAIAELKAVNPKVTVTFYPYDVTVPVAETTKLLKTIFAQIKTIDVLINGAGILDDHQIERTIAVNYTGLVNTTTAILDFWDKRKGGPGGIICNIGSVTGFNAIYQVPVYSGSKAAVVNFTSSLAKLAPITGVTAYTVNPGITKTTLVHKFNSWLDVEPRVAEKLLEHPTQTSQQCAENFVKAIELNKNGAIWKLDLGTLEPITWTKHWDSGI.

Position 10-33 (10-33 (FVAGLGGIGLDTSRELVKRDLKNL)) interacts with NAD(+). Ser-138 lines the substrate pocket. Tyr-151 (proton acceptor) is an active-site residue.

This sequence belongs to the short-chain dehydrogenases/reductases (SDR) family. As to quaternary structure, homodimer.

The enzyme catalyses a primary alcohol + NAD(+) = an aldehyde + NADH + H(+). The catalysed reaction is a secondary alcohol + NAD(+) = a ketone + NADH + H(+). The chain is Alcohol dehydrogenase (Adh) from Drosophila guanche (Fruit fly).